We begin with the raw amino-acid sequence, 231 residues long: NADH-ubiquinone oxidoreductase chain 4 (231 aa).

The next 7 membrane-spanning stretches (helical) occupy residues 1-21, 34-54, 63-85, 89-111, 128-148, 169-189, and 211-231; these read PIAG…YGII, VFLP…LTCL, IAYS…TPWG, AMAL…NTTY, MMPM…AIPP, TIIM…HMFL, and LLMT…ELVT.

The protein belongs to the complex I subunit 4 family.

It localises to the mitochondrion membrane. The enzyme catalyses a ubiquinone + NADH + 5 H(+)(in) = a ubiquinol + NAD(+) + 4 H(+)(out). Its function is as follows. Core subunit of the mitochondrial membrane respiratory chain NADH dehydrogenase (Complex I) that is believed to belong to the minimal assembly required for catalysis. Complex I functions in the transfer of electrons from NADH to the respiratory chain. The immediate electron acceptor for the enzyme is believed to be ubiquinone. This chain is NADH-ubiquinone oxidoreductase chain 4 (MT-ND4), found in Sistrurus miliarius (Pigmy rattlesnake).